The sequence spans 74 residues: Anaphase-promoting complex subunit 13 (74 aa).

Belongs to the APC13 family. In terms of assembly, the APC/C is composed of at least 12 subunits.

It localises to the nucleus. It participates in protein modification; protein ubiquitination. Functionally, component of the anaphase promoting complex/cyclosome (APC/C), a cell cycle-regulated E3 ubiquitin ligase that controls progression through mitosis and the G1 phase of the cell cycle. The APC/C complex acts by mediating ubiquitination and subsequent degradation of target proteins: it mainly mediates the formation of 'Lys-11'-linked polyubiquitin chains and, to a lower extent, the formation of 'Lys-48'- and 'Lys-63'-linked polyubiquitin chains. The APC/C complex catalyzes assembly of branched 'Lys-11'-/'Lys-48'-linked branched ubiquitin chains on target proteins. The protein is Anaphase-promoting complex subunit 13 (anapc13) of Xenopus tropicalis (Western clawed frog).